The following is a 185-amino-acid chain: Ribosome-recycling factor (185 aa).

Belongs to the RRF family.

It localises to the cytoplasm. Its function is as follows. Responsible for the release of ribosomes from messenger RNA at the termination of protein biosynthesis. May increase the efficiency of translation by recycling ribosomes from one round of translation to another. This Alcanivorax borkumensis (strain ATCC 700651 / DSM 11573 / NCIMB 13689 / SK2) protein is Ribosome-recycling factor.